A 171-amino-acid chain; its full sequence is Large ribosomal subunit protein uL10 (171 aa).

The protein belongs to the universal ribosomal protein uL10 family. As to quaternary structure, part of the ribosomal stalk of the 50S ribosomal subunit. The N-terminus interacts with L11 and the large rRNA to form the base of the stalk. The C-terminus forms an elongated spine to which L12 dimers bind in a sequential fashion forming a multimeric L10(L12)X complex.

Its function is as follows. Forms part of the ribosomal stalk, playing a central role in the interaction of the ribosome with GTP-bound translation factors. This is Large ribosomal subunit protein uL10 (rplJ) from Lactococcus lactis subsp. lactis (strain IL1403) (Streptococcus lactis).